The primary structure comprises 475 residues: Ribulose bisphosphate carboxylase large chain (475 aa).

A propeptide spanning residues 1–2 is cleaved from the precursor; that stretch reads MS. An N-acetylproline modification is found at P3. K14 is subject to N6,N6,N6-trimethyllysine. Residues N123 and T173 each contribute to the substrate site. The Proton acceptor role is filled by K175. Residue K177 coordinates substrate. Mg(2+) contacts are provided by K201, D203, and E204. K201 is subject to N6-carboxylysine. Catalysis depends on H294, which acts as the Proton acceptor. Positions 295, 327, and 379 each coordinate substrate.

It belongs to the RuBisCO large chain family. Type I subfamily. In terms of assembly, heterohexadecamer of 8 large chains and 8 small chains; disulfide-linked. The disulfide link is formed within the large subunit homodimers. It depends on Mg(2+) as a cofactor. Post-translationally, the disulfide bond which can form in the large chain dimeric partners within the hexadecamer appears to be associated with oxidative stress and protein turnover.

It localises to the plastid. Its subcellular location is the chloroplast. The enzyme catalyses 2 (2R)-3-phosphoglycerate + 2 H(+) = D-ribulose 1,5-bisphosphate + CO2 + H2O. The catalysed reaction is D-ribulose 1,5-bisphosphate + O2 = 2-phosphoglycolate + (2R)-3-phosphoglycerate + 2 H(+). In terms of biological role, ruBisCO catalyzes two reactions: the carboxylation of D-ribulose 1,5-bisphosphate, the primary event in carbon dioxide fixation, as well as the oxidative fragmentation of the pentose substrate in the photorespiration process. Both reactions occur simultaneously and in competition at the same active site. The polypeptide is Ribulose bisphosphate carboxylase large chain (Pseudolarix amabilis (Golden larch)).